We begin with the raw amino-acid sequence, 77 residues long: Acyl carrier protein (77 aa).

Positions 3–77 constitute a Carrier domain; sequence QEIFEKVKKI…GKAVEHIESK (75 aa). Serine 38 is modified (O-(pantetheine 4'-phosphoryl)serine).

The protein belongs to the acyl carrier protein (ACP) family. In terms of processing, 4'-phosphopantetheine is transferred from CoA to a specific serine of apo-ACP by AcpS. This modification is essential for activity because fatty acids are bound in thioester linkage to the sulfhydryl of the prosthetic group.

It localises to the cytoplasm. The protein operates within lipid metabolism; fatty acid biosynthesis. In terms of biological role, carrier of the growing fatty acid chain in fatty acid biosynthesis. In Synechocystis sp. (strain ATCC 27184 / PCC 6803 / Kazusa), this protein is Acyl carrier protein.